Reading from the N-terminus, the 548-residue chain is Membrane protein insertase YidC (548 aa).

The chain crosses the membrane as a helical span at residues 6 to 26 (NLLVIALLFVSFMIWQAWEQD). Residues 28 to 56 (NPQPQTQQTTQTTTTAAGSAADQGVPASG) are disordered. Low complexity predominate over residues 29–42 (PQPQTQQTTQTTTT). Transmembrane regions (helical) follow at residues 350-370 (FVGN…GIMY), 424-444 (FPLI…MGSI), 458-478 (LSAQ…MFFI), and 499-519 (PVIF…YYIV).

It belongs to the OXA1/ALB3/YidC family. Type 1 subfamily. As to quaternary structure, interacts with the Sec translocase complex via SecD. Specifically interacts with transmembrane segments of nascent integral membrane proteins during membrane integration.

It localises to the cell inner membrane. Functionally, required for the insertion and/or proper folding and/or complex formation of integral membrane proteins into the membrane. Involved in integration of membrane proteins that insert both dependently and independently of the Sec translocase complex, as well as at least some lipoproteins. Aids folding of multispanning membrane proteins. The sequence is that of Membrane protein insertase YidC from Salmonella agona (strain SL483).